The sequence spans 116 residues: Biogenesis of lysosome-related organelles complex 1 subunit CNL1 (116 aa).

A coiled-coil region spans residues 63 to 95 (DIVDVNIQSFKDILSKCEELENYFTMLDQIEMI).

The protein belongs to the BLOC1S4 family. As to quaternary structure, component of the biogenesis of lysosome-related organelles complex-1 (BLOC-1).

The protein resides in the cytoplasm. Its function is as follows. Component of the biogenesis of lysosome-related organelles complex-1 (BLOC-1), a complex that is involved in endosomal cargo sorting. This is Biogenesis of lysosome-related organelles complex 1 subunit CNL1 (CLN1) from Vanderwaltozyma polyspora (strain ATCC 22028 / DSM 70294 / BCRC 21397 / CBS 2163 / NBRC 10782 / NRRL Y-8283 / UCD 57-17) (Kluyveromyces polysporus).